A 334-amino-acid polypeptide reads, in one-letter code: Glyoxylate reductase (334 aa).

Residues 158–161, 180–182, and 239–241 contribute to the NADP(+) site; these read FGRI, SRT, and IAR. Catalysis depends on residues Arg241 and Glu270. The Proton donor role is filled by His288. 288 to 290 is an NADP(+) binding site; that stretch reads HIG.

Belongs to the D-isomer specific 2-hydroxyacid dehydrogenase family. GyaR subfamily. In terms of assembly, homodimer.

It localises to the cytoplasm. The enzyme catalyses glycolate + NAD(+) = glyoxylate + NADH + H(+). This chain is Glyoxylate reductase, found in Thermococcus onnurineus (strain NA1).